Here is a 707-residue protein sequence, read N- to C-terminus: ATP-dependent RNA helicase DHX33 (707 aa).

Positions 1 to 64 are disordered; sequence MPEEAGFPPA…LAQPSASPYP (64 aa). The required for nucleolar location stretch occupies residues 1 to 80; sequence MPEEAGFPPA…RRSLPIFQAR (80 aa). Gly residues predominate over residues 39–49; sequence GSGGRGGGGGR. The segment covering 50–64 has biased composition (low complexity); sequence RQQPPLAQPSASPYP. A Helicase ATP-binding domain is found at 84–252; that stretch reads LAQLRNLDNA…FNGAPVLYLE (169 aa). 97-104 contributes to the ATP binding site; sequence GETGSGKT. The short motif at 194–197 is the DEAH box element; sequence DEAH. Positions 277 to 450 constitute a Helicase C-terminal domain; sequence SVFQIHQEAP…SVMLQLLAMK (174 aa). The interval 471-562 is HA2; required for interaction with EIF3G and RPL26; it reads AIAQLDLLGA…ISSEGDHMTL (92 aa). The Critical for rDNA-binding motif lies at 547–558; the sequence is GVRKKFISSEGD.

It belongs to the DEAD box helicase family. DEAH subfamily. Interacts with UBTF. Interacts with DDX3X, EIF3G and EIF3H; the interaction is independent of RNA. Interacts (via HA2 region and Helicase C-terminal domain) with the components of the large ribosomal subunit RPL3, RPL7, RPL26 and RPL27. Interacts (via DEAH box) with NLRP3 (via NACHT domain). Binds to mRNA. Binds to double-stranded RNA (via the helicase C-terminal domain). Interacts (via the helicase C-terminal domain) with MAVS. In terms of processing, ubiquitinated, leading to its degradation by the proteasome. Deubiquitinated by USP36.

It is found in the nucleus. The protein localises to the nucleolus. Its subcellular location is the nucleoplasm. It localises to the cytoplasm. The protein resides in the inflammasome. It carries out the reaction ATP + H2O = ADP + phosphate + H(+). Implicated in nucleolar organization, ribosome biogenesis, protein synthesis and cytoplasmic dsRNA sensing. Stimulates RNA polymerase I transcription of the 47S precursor rRNA. Associates with ribosomal DNA (rDNA) loci where it is involved in POLR1A recruitment. In the cytoplasm, promotes elongation-competent 80S ribosome assembly at the late stage of mRNA translation initiation. Senses cytosolic dsRNA mediating NLRP3 inflammasome formation in macrophages and type I interferon production in myeloid dendritic cells. Required for NLRP3 activation induced by viral dsRNA and bacterial RNA. In dendritic cells, required for induction of type I interferon production induced by cytoplasmic dsRNA via the activation of MAPK and NF-kappa-B signaling pathways. The sequence is that of ATP-dependent RNA helicase DHX33 from Homo sapiens (Human).